The sequence spans 519 residues: Xylose import ATP-binding protein XylG (519 aa).

ABC transporter domains lie at 6 to 245 (LTMR…VGRE) and 262 to 507 (LEAR…LTPA). 38 to 45 (GENGAGKS) contributes to the ATP binding site.

This sequence belongs to the ABC transporter superfamily. Xylose importer (TC 3.A.1.2.4) family. As to quaternary structure, the complex is composed of two ATP-binding proteins (XylG), two transmembrane proteins (XylH) and a solute-binding protein (XylF).

The protein localises to the cell inner membrane. It carries out the reaction D-xylose(out) + ATP + H2O = D-xylose(in) + ADP + phosphate + H(+). In terms of biological role, part of the ABC transporter complex XylFGH involved in xylose import. Responsible for energy coupling to the transport system. The protein is Xylose import ATP-binding protein XylG of Burkholderia ambifaria (strain ATCC BAA-244 / DSM 16087 / CCUG 44356 / LMG 19182 / AMMD) (Burkholderia cepacia (strain AMMD)).